A 650-amino-acid chain; its full sequence is Acetyl-coenzyme A synthetase (650 aa).

CoA contacts are provided by residues 191 to 194, threonine 311, and asparagine 335; that span reads RGGR. ATP-binding positions include 387–389, 411–416, aspartate 500, and arginine 515; these read GEP and DTWWQT. Residue serine 523 coordinates CoA. Arginine 526 is a binding site for ATP. 3 residues coordinate Mg(2+): valine 537, histidine 539, and valine 542. Arginine 584 is a CoA binding site. N6-acetyllysine is present on lysine 609.

This sequence belongs to the ATP-dependent AMP-binding enzyme family. Requires Mg(2+) as cofactor. In terms of processing, acetylated. Deacetylation by the SIR2-homolog deacetylase activates the enzyme.

The catalysed reaction is acetate + ATP + CoA = acetyl-CoA + AMP + diphosphate. Catalyzes the conversion of acetate into acetyl-CoA (AcCoA), an essential intermediate at the junction of anabolic and catabolic pathways. AcsA undergoes a two-step reaction. In the first half reaction, AcsA combines acetate with ATP to form acetyl-adenylate (AcAMP) intermediate. In the second half reaction, it can then transfer the acetyl group from AcAMP to the sulfhydryl group of CoA, forming the product AcCoA. In Shewanella sediminis (strain HAW-EB3), this protein is Acetyl-coenzyme A synthetase.